The primary structure comprises 74 residues: Sec-independent protein translocase protein TatA (74 aa).

Residues 1–21 (MGGISIWQLLIIVAIVVLLFG) form a helical membrane-spanning segment. The segment at 45–74 (EEPKDAEFKSLDKAENTAQTKKEEKEKEQA) is disordered.

This sequence belongs to the TatA/E family. As to quaternary structure, the Tat system comprises two distinct complexes: a TatABC complex, containing multiple copies of TatA, TatB and TatC subunits, and a separate TatA complex, containing only TatA subunits. Substrates initially bind to the TatABC complex, which probably triggers association of the separate TatA complex to form the active translocon.

The protein localises to the cell inner membrane. In terms of biological role, part of the twin-arginine translocation (Tat) system that transports large folded proteins containing a characteristic twin-arginine motif in their signal peptide across membranes. TatA could form the protein-conducting channel of the Tat system. This chain is Sec-independent protein translocase protein TatA, found in Actinobacillus succinogenes (strain ATCC 55618 / DSM 22257 / CCUG 43843 / 130Z).